Consider the following 137-residue polypeptide: Chaperone protein YscB (137 aa).

As to quaternary structure, interacts with SycN to form a complex which specifically binds to YopN.

It localises to the cytoplasm. It is found in the cell inner membrane. Its function is as follows. Functions as a specific chaperone for YopN. It could facilitate the secretion and the subsequent translocation of YopN. This is Chaperone protein YscB (yscB) from Yersinia enterocolitica serotype O:8 / biotype 1B (strain NCTC 13174 / 8081).